A 308-amino-acid chain; its full sequence is Zinc-binding protein TroA (308 aa).

The N-terminal stretch at 1 to 22 (MIRERICACVLALGMLTGFTHA) is a signal peptide. Zn(2+)-binding residues include histidine 68, histidine 133, histidine 199, and aspartate 279.

It belongs to the bacterial solute-binding protein 9 family. As to quaternary structure, monomer.

It is found in the periplasm. Its function is as follows. Part of the ATP-binding cassette (ABC) transport system TroABC involved in zinc import. Binds zinc with high affinity and specificity and delivers it to the membrane permease for translocation into the cytoplasm. The chain is Zinc-binding protein TroA (troA) from Treponema pallidum (strain Nichols).